We begin with the raw amino-acid sequence, 880 residues long: Interference hedgehog (880 aa).

Positions 1-20 (MTLLTSSLLLFSLLTSRLEA) are cleaved as a signal peptide. Residues 21–703 (IPVLEKSPAH…ETFNMSPMLT (683 aa)) are Extracellular-facing. Ig-like C2-type domains lie at 45 to 142 (PGVR…TARL), 132 to 232 (PLVV…ERIQ), 252 to 340 (PHLL…YIKV), and 346 to 432 (PQIV…LQVN). Intrachain disulfides connect cysteine 68-cysteine 126, cysteine 173-cysteine 220, cysteine 276-cysteine 324, and cysteine 367-cysteine 414. N-linked (GlcNAc...) asparagine glycans are attached at residues asparagine 102 and asparagine 209. A disordered region spans residues 426–467 (GTLLQVNPKQIQEPRESGGTHRPKPNQGSKQKQMYPPTPPNV). 2 Fibronectin type-III domains span residues 461–567 (PPTP…LQPG) and 575–670 (VPEL…TQRP). N-linked (GlcNAc...) asparagine glycosylation is present at asparagine 466. Positions 497, 501, 503, and 541 each coordinate heparin. A glycan (N-linked (GlcNAc...) asparagine) is linked at asparagine 557. The tract at residues 662–697 (LKQGRTQRPKTSTTEEPTLQMGDRDTTTPSHNETFN) is disordered. Polar residues-rich tracts occupy residues 665–678 (GRTQ…TEEP) and 688–697 (TTPSHNETFN). An N-linked (GlcNAc...) asparagine glycan is attached at asparagine 693. Residues 704–724 (GTIGGGAVLILLLISTCLCVC) form a helical membrane-spanning segment. The Cytoplasmic portion of the chain corresponds to 725–880 (RRRTSRSRGN…SSGSLNSVGV (156 aa)). Disordered stretches follow at residues 728–762 (TSRS…QRQR) and 775–880 (QQQQ…SVGV). Composition is skewed to low complexity over residues 823-837 (RAGG…NNNN) and 864-880 (SSRS…SVGV).

Belongs to the immunoglobulin superfamily. IHOG family. In terms of assembly, homodimer. Heterotetramer; 2 iHog chains bind 2 hh chains when facilitated by heparin, heparin is required to promote high-affinity interactions between hh and iHog.

It localises to the membrane. Its function is as follows. Mediates response to the active Hedgehog (Hh) protein signal in embryos, functioning upstream or at the level of patched (ptc). The sequence is that of Interference hedgehog from Drosophila sechellia (Fruit fly).